The chain runs to 419 residues: tRNA modification GTPase MnmE (419 aa).

(6S)-5-formyl-5,6,7,8-tetrahydrofolate is bound by residues R20, E76, and R115. The TrmE-type G domain occupies G211–R348. Residue N221 coordinates K(+). GTP is bound by residues N221–T226, S240–T246, and D265–G268. S225 lines the Mg(2+) pocket. Residues S240, I242, and T245 each coordinate K(+). Position 246 (T246) interacts with Mg(2+). Position 419 (K419) interacts with (6S)-5-formyl-5,6,7,8-tetrahydrofolate.

It belongs to the TRAFAC class TrmE-Era-EngA-EngB-Septin-like GTPase superfamily. TrmE GTPase family. As to quaternary structure, homodimer. Heterotetramer of two MnmE and two MnmG subunits. The cofactor is K(+).

It localises to the cytoplasm. Its function is as follows. Exhibits a very high intrinsic GTPase hydrolysis rate. Involved in the addition of a carboxymethylaminomethyl (cmnm) group at the wobble position (U34) of certain tRNAs, forming tRNA-cmnm(5)s(2)U34. This chain is tRNA modification GTPase MnmE, found in Paracoccus denitrificans (strain Pd 1222).